Consider the following 649-residue polypeptide: Threonine--tRNA ligase (649 aa).

One can recognise a TGS domain in the interval 1 to 63 (MSSIKITFPD…KEDGSIEIIT (63 aa)). Positions 245–543 (DHRVIGNELD…LTEMYKGAFP (299 aa)) are catalytic. The Zn(2+) site is built by C339, H390, and H520.

This sequence belongs to the class-II aminoacyl-tRNA synthetase family. Homodimer. Zn(2+) is required as a cofactor.

The protein resides in the cytoplasm. The enzyme catalyses tRNA(Thr) + L-threonine + ATP = L-threonyl-tRNA(Thr) + AMP + diphosphate + H(+). Functionally, catalyzes the attachment of threonine to tRNA(Thr) in a two-step reaction: L-threonine is first activated by ATP to form Thr-AMP and then transferred to the acceptor end of tRNA(Thr). Also edits incorrectly charged L-seryl-tRNA(Thr). This is Threonine--tRNA ligase from Ligilactobacillus salivarius (strain UCC118) (Lactobacillus salivarius).